A 443-amino-acid polypeptide reads, in one-letter code: Ribulose bisphosphate carboxylase large chain (443 aa).

An N6,N6,N6-trimethyllysine modification is found at Lys3. Asn112 and Thr162 together coordinate substrate. Lys164 functions as the Proton acceptor in the catalytic mechanism. Substrate is bound at residue Lys166. Mg(2+)-binding residues include Lys190, Asp192, and Glu193. An N6-carboxylysine modification is found at Lys190. His283 acts as the Proton acceptor in catalysis. Residues Arg284, His316, and Ser368 each coordinate substrate.

The protein belongs to the RuBisCO large chain family. Type I subfamily. In terms of assembly, heterohexadecamer of 8 large chains and 8 small chains; disulfide-linked. The disulfide link is formed within the large subunit homodimers. Mg(2+) serves as cofactor. The disulfide bond which can form in the large chain dimeric partners within the hexadecamer appears to be associated with oxidative stress and protein turnover.

The protein resides in the plastid. It localises to the chloroplast. The enzyme catalyses 2 (2R)-3-phosphoglycerate + 2 H(+) = D-ribulose 1,5-bisphosphate + CO2 + H2O. The catalysed reaction is D-ribulose 1,5-bisphosphate + O2 = 2-phosphoglycolate + (2R)-3-phosphoglycerate + 2 H(+). RuBisCO catalyzes two reactions: the carboxylation of D-ribulose 1,5-bisphosphate, the primary event in carbon dioxide fixation, as well as the oxidative fragmentation of the pentose substrate in the photorespiration process. Both reactions occur simultaneously and in competition at the same active site. The protein is Ribulose bisphosphate carboxylase large chain of Iris germanica (Bearded iris).